A 31-amino-acid polypeptide reads, in one-letter code: Basic phospholipase A2 13 (31 aa).

This sequence belongs to the phospholipase A2 family. Group I subfamily. Ca(2+) is required as a cofactor. Expressed by the venom gland.

Its subcellular location is the secreted. The catalysed reaction is a 1,2-diacyl-sn-glycero-3-phosphocholine + H2O = a 1-acyl-sn-glycero-3-phosphocholine + a fatty acid + H(+). Snake venom phospholipase A2 (PLA2) that inhibits neuromuscular transmission by blocking acetylcholine release from the nerve termini. PLA2 catalyzes the calcium-dependent hydrolysis of the 2-acyl groups in 3-sn-phosphoglycerides. This Bungarus fasciatus (Banded krait) protein is Basic phospholipase A2 13.